A 287-amino-acid chain; its full sequence is Elongation factor Ts (287 aa).

Positions 81–84 (TDFV) are involved in Mg(2+) ion dislocation from EF-Tu.

It belongs to the EF-Ts family.

It is found in the cytoplasm. In terms of biological role, associates with the EF-Tu.GDP complex and induces the exchange of GDP to GTP. It remains bound to the aminoacyl-tRNA.EF-Tu.GTP complex up to the GTP hydrolysis stage on the ribosome. The sequence is that of Elongation factor Ts from Nitratidesulfovibrio vulgaris (strain ATCC 29579 / DSM 644 / CCUG 34227 / NCIMB 8303 / VKM B-1760 / Hildenborough) (Desulfovibrio vulgaris).